The primary structure comprises 508 residues: WD repeat-containing protein JIP5 (508 aa).

WD repeat units lie at residues 46–94, 105–144, 150–189, 194–234, 252–293, and 344–381; these read LATG…GVET, RHKG…VVKK, GQNV…QTNL, HNGD…EGDF, DQED…LADQ, and SKLD…QLTP. The tract at residues 372–508 is disordered; it reads DSEKSEQLTP…THGIRRFEGL (137 aa). The span at 491–508 shows a compositional bias: basic and acidic residues; it reads IKPERSMKTHGIRRFEGL.

This sequence belongs to the WD repeat WDR55 family.

The protein resides in the nucleus. It is found in the nucleolus. The protein is WD repeat-containing protein JIP5 (JIP5) of Eremothecium gossypii (strain ATCC 10895 / CBS 109.51 / FGSC 9923 / NRRL Y-1056) (Yeast).